The chain runs to 1014 residues: Valine--tRNA ligase (1014 aa).

The 'HIGH' region motif lies at 49–59 (PNVTGSLHMGH). Positions 542–546 (KMSKS) match the 'KMSKS' region motif. Lys545 is an ATP binding site. The stretch at 947–1014 (VVDIETLRAK…ILRLRLQTLV (68 aa)) forms a coiled coil.

Belongs to the class-I aminoacyl-tRNA synthetase family. ValS type 1 subfamily. As to quaternary structure, monomer.

It localises to the cytoplasm. It catalyses the reaction tRNA(Val) + L-valine + ATP = L-valyl-tRNA(Val) + AMP + diphosphate. In terms of biological role, catalyzes the attachment of valine to tRNA(Val). As ValRS can inadvertently accommodate and process structurally similar amino acids such as threonine, to avoid such errors, it has a 'posttransfer' editing activity that hydrolyzes mischarged Thr-tRNA(Val) in a tRNA-dependent manner. The polypeptide is Valine--tRNA ligase (Nostoc sp. (strain PCC 7120 / SAG 25.82 / UTEX 2576)).